We begin with the raw amino-acid sequence, 156 residues long: MNLNATFFAQMVVFFILWWVVAKFIWPPLVKALDERAKKIADGLAAAEKGKAELELANKRVDQAMAEARTEGAQRVADAEKRAQLTADEIKQNAQAEAARIIAQAKAEAEQQVTRARESLRDQVAVLAVKGAEQILKREVNAQVHADLLNQLKAEL.

A helical membrane pass occupies residues 7–27 (FFAQMVVFFILWWVVAKFIWP).

The protein belongs to the ATPase B chain family. In terms of assembly, F-type ATPases have 2 components, F(1) - the catalytic core - and F(0) - the membrane proton channel. F(1) has five subunits: alpha(3), beta(3), gamma(1), delta(1), epsilon(1). F(0) has three main subunits: a(1), b(2) and c(10-14). The alpha and beta chains form an alternating ring which encloses part of the gamma chain. F(1) is attached to F(0) by a central stalk formed by the gamma and epsilon chains, while a peripheral stalk is formed by the delta and b chains.

Its subcellular location is the cell inner membrane. F(1)F(0) ATP synthase produces ATP from ADP in the presence of a proton or sodium gradient. F-type ATPases consist of two structural domains, F(1) containing the extramembraneous catalytic core and F(0) containing the membrane proton channel, linked together by a central stalk and a peripheral stalk. During catalysis, ATP synthesis in the catalytic domain of F(1) is coupled via a rotary mechanism of the central stalk subunits to proton translocation. Its function is as follows. Component of the F(0) channel, it forms part of the peripheral stalk, linking F(1) to F(0). The polypeptide is ATP synthase subunit b (Cupriavidus metallidurans (strain ATCC 43123 / DSM 2839 / NBRC 102507 / CH34) (Ralstonia metallidurans)).